We begin with the raw amino-acid sequence, 258 residues long: Apolipoprotein E (258 aa).

A signal peptide spans 1 to 19; sequence MRVWTVLLGAVLLLAACQA. Repeat copies occupy residues 112–133, 134–155, and 156–173. The 3 X 22 AA approximate tandem repeats stretch occupies residues 112 to 173; sequence VDMEEAKTRV…KLEAYSKEAT (62 aa).

This sequence belongs to the apolipoprotein A1/A4/E family. In terms of assembly, homotetramer.

The protein localises to the secreted. Its subcellular location is the extracellular space. It is found in the extracellular matrix. Its function is as follows. APOE is an apolipoprotein, a protein associating with lipid particles, that mainly functions in lipoprotein-mediated lipid transport between organs via the plasma and interstitial fluids. APOE is a core component of plasma lipoproteins and is involved in their production, conversion and clearance. Apolipoproteins are amphipathic molecules that interact both with lipids of the lipoprotein particle core and the aqueous environment of the plasma. The chain is Apolipoprotein E (APOE) from Alligator mississippiensis (American alligator).